We begin with the raw amino-acid sequence, 263 residues long: Benzil reductase ((S)-benzoin forming) IRC24 (263 aa).

NADP(+)-binding residues include Ile7 and Asn86. The active-site Proton donor is Ser143. 4 residues coordinate NADP(+): Tyr157, Lys161, Val190, and Thr192. Tyr157 acts as the Proton acceptor in catalysis. Lys161 serves as the catalytic Lowers pKa of active site Tyr.

It belongs to the short-chain dehydrogenases/reductases (SDR) family.

It carries out the reaction (S)-benzoin + NADP(+) = benzil + NADPH + H(+). The catalysed reaction is 2-hydroxy-1-phenyl-1-propanone + NADP(+) = 1-phenyl-1,2-propanedione + NADPH + H(+). Reduces benzil stereospecifically to (S)-benzoin. Also reduces 1-phenyl-1,2-propanedione to 2-hydroxy-1-phenyl-1-propanone. Is probably involved in a pathway contributing to genomic integrity. The polypeptide is Benzil reductase ((S)-benzoin forming) IRC24 (IRC24) (Saccharomyces cerevisiae (strain ATCC 204508 / S288c) (Baker's yeast)).